A 205-amino-acid polypeptide reads, in one-letter code: Probable thymidylate kinase (205 aa).

9-16 (GIDGVGKS) is a binding site for ATP.

Belongs to the thymidylate kinase family.

The catalysed reaction is dTMP + ATP = dTDP + ADP. The polypeptide is Probable thymidylate kinase (Caldivirga maquilingensis (strain ATCC 700844 / DSM 13496 / JCM 10307 / IC-167)).